The primary structure comprises 555 residues: Oxygen-dependent choline dehydrogenase (555 aa).

FAD is bound at residue 4–33; that stretch reads DYIIIGAGSAGNVLATRLTEDADVSVLLLE. A disordered region spans residues 180-202; that stretch reads QQEGFGPMDRTVTPKGRRASTAR. Residue histidine 473 is the Proton acceptor of the active site.

This sequence belongs to the GMC oxidoreductase family. FAD serves as cofactor.

The enzyme catalyses choline + A = betaine aldehyde + AH2. It carries out the reaction betaine aldehyde + NAD(+) + H2O = glycine betaine + NADH + 2 H(+). Its pathway is amine and polyamine biosynthesis; betaine biosynthesis via choline pathway; betaine aldehyde from choline (cytochrome c reductase route): step 1/1. In terms of biological role, involved in the biosynthesis of the osmoprotectant glycine betaine. Catalyzes the oxidation of choline to betaine aldehyde and betaine aldehyde to glycine betaine at the same rate. The sequence is that of Oxygen-dependent choline dehydrogenase from Serratia proteamaculans (strain 568).